Consider the following 579-residue polypeptide: Maintenance of mitochondrial morphology protein 1 (579 aa).

Residues 1 to 43 (MQQPQQQDLQIGLPYAPVQPPIPSPAAYFAYLPSPSRWTFTQG) lie on the Lumenal side of the membrane. Residues 44–64 (LIVGQVSMVIVALLLIRYVIF) traverse the membrane as a helical segment. Residues 65–579 (EDSATALEKE…GLRNRPGFVQ (515 aa)) lie on the Cytoplasmic side of the membrane. An SMP-LTD domain is found at 150–391 (LPESADWLNV…WPRYWSLTLP (242 aa)). Disordered stretches follow at residues 309-332 (VLPT…RSRH), 460-479 (RPSL…SGLR), and 558-579 (SSVL…GFVQ). 2 stretches are compositionally biased toward low complexity: residues 311-328 (PTAN…ATPP) and 465-476 (SSRPPHVRSSSS).

Belongs to the MMM1 family. Homodimer. Component of the ER-mitochondria encounter structure (ERMES) or MDM complex, composed of MMM1, MDM10, MDM12 and MDM34. An MMM1 homodimer associates with one molecule of MDM12 on each side in a pairwise head-to-tail manner, and the SMP-LTD domains of MMM1 and MDM12 generate a continuous hydrophobic tunnel for phospholipid trafficking.

It localises to the endoplasmic reticulum membrane. Component of the ERMES/MDM complex, which serves as a molecular tether to connect the endoplasmic reticulum (ER) and mitochondria. Components of this complex are involved in the control of mitochondrial shape and protein biogenesis, and function in nonvesicular lipid trafficking between the ER and mitochondria. The MDM12-MMM1 subcomplex functions in the major beta-barrel assembly pathway that is responsible for biogenesis of all outer membrane beta-barrel proteins, and acts in a late step after the SAM complex. The MDM10-MDM12-MMM1 subcomplex further acts in the TOM40-specific pathway after the action of the MDM12-MMM1 complex. Essential for establishing and maintaining the structure of mitochondria and maintenance of mtDNA nucleoids. This chain is Maintenance of mitochondrial morphology protein 1, found in Mycosarcoma maydis (Corn smut fungus).